Here is a 197-residue protein sequence, read N- to C-terminus: Ras-like protein rasB (197 aa).

Residue G13–S20 participates in GTP binding. An Effector region motif is present at residues Y35–Y43. GTP-binding positions include D60–Q64 and N119–D122. C194 is modified (cysteine methyl ester). C194 is lipidated: S-geranylgeranyl cysteine. Positions L195 to L197 are cleaved as a propeptide — removed in mature form.

Belongs to the small GTPase superfamily. Ras family.

Its subcellular location is the cell membrane. It carries out the reaction GTP + H2O = GDP + phosphate + H(+). Its activity is regulated as follows. Alternates between an inactive form bound to GDP and an active form bound to GTP. Activated by a guanine nucleotide-exchange factor (GEF) and inactivated by a GTPase-activating protein (GAP). Ras proteins bind GDP/GTP and possess intrinsic GTPase activity. This Dictyostelium discoideum (Social amoeba) protein is Ras-like protein rasB (rasB).